The primary structure comprises 117 residues: Large ribosomal subunit protein bL17 (117 aa).

Belongs to the bacterial ribosomal protein bL17 family. Part of the 50S ribosomal subunit. Contacts protein L32.

The polypeptide is Large ribosomal subunit protein bL17 (Dehalococcoides mccartyi (strain ATCC BAA-2100 / JCM 16839 / KCTC 5957 / BAV1)).